The chain runs to 517 residues: MTENTSAEGPQTLRELQIANRQLGARNAKLVELLQASRTKLEEINGRLEALAEPPSTYGTLLQANRDFTAEVFTAGRRMRLMVSPHVPQHELVPGAMVRLGEGQQVVEVTGQPDFGDIAQVVEVSGDRLIIADKVGEEYVVKAAGDLAKEVVTGDSVIVDRKSGWAFEAVPRAETNNLILEEVPDVTYDDIGGLGQQITQIRDAVELPFLHPEIYTRYGLRPPKGVLLYGPPGNGKTLIAKAVANSLAQSDSPYFLNIKGPELLNKFVGETERQIRAIFEQARRVASSGRPVIVFFDEMEALFRTRGTGVSSDMESTVVPQLLAELDGVEAAGNVIVIGASNREELIDPAILRPGRLDVKIRIARPDAFGAAAILSKHLDASLPIDADFSAATGSNEAAAAALRQSIVDELFTRDEEHRYVTLHYADGSREDLYWADFVSGAMLANIVDRAKTLAIKDALHNGANGTDGLRPEHVNAAVLAEVGDSEDLPDTTNPAEWARIYGHGTKRVVDIDVHKV.

Residues A25–E53 are a coiled coil. G233–L238 is an ATP binding site.

The protein belongs to the AAA ATPase family. As to quaternary structure, homohexamer. Assembles into a hexameric ring structure.

In Corynebacterium jeikeium (strain K411), this protein is AAA ATPase forming ring-shaped complexes.